The sequence spans 158 residues: Non-secretory ribonuclease (158 aa).

Positions 1 to 27 (MVPKLFTSQICLLLLLGLLGVEGSLHA) are cleaved as a signal peptide. Histidine 42 serves as the catalytic Proton acceptor. 4 disulfide bridges follow: cysteine 50–cysteine 110, cysteine 64–cysteine 121, cysteine 82–cysteine 136, and cysteine 89–cysteine 98. Tyrosine 60 bears the 3'-nitrotyrosine mark. Position 65-69 (65-69 (KNQNT)) interacts with substrate. N-linked (GlcNAc...) asparagine glycans are attached at residues asparagine 86, asparagine 92, and asparagine 111. The Proton donor role is filled by histidine 153.

It belongs to the pancreatic ribonuclease family. In terms of assembly, interacts with and forms a tight 1:1 complex with RNH1. Dimerization of two such complexes may occur.

The protein localises to the lysosome. It localises to the cytoplasmic granule. The catalysed reaction is an [RNA] containing cytidine + H2O = an [RNA]-3'-cytidine-3'-phosphate + a 5'-hydroxy-ribonucleotide-3'-[RNA].. It catalyses the reaction an [RNA] containing uridine + H2O = an [RNA]-3'-uridine-3'-phosphate + a 5'-hydroxy-ribonucleotide-3'-[RNA].. Its function is as follows. This is a non-secretory ribonuclease. It is a pyrimidine specific nuclease with a slight preference for U. Cytotoxin and helminthotoxin. Possesses a wide variety of biological activities. The protein is Non-secretory ribonuclease (RNASE2) of Aotus trivirgatus (Three-striped night monkey).